Reading from the N-terminus, the 33-residue chain is Brevinin-2Eb (33 aa).

An intrachain disulfide couples Cys27 to Cys33.

Belongs to the frog skin active peptide (FSAP) family. Brevinin subfamily. In terms of tissue distribution, expressed by the skin glands.

The protein localises to the secreted. Shows antibacterial activity against representative Gram-negative and Gram-positive bacterial species, and hemolytic activity. The protein is Brevinin-2Eb of Pelophylax lessonae (Pool frog).